The following is a 63-amino-acid chain: Trypsin inhibitor 5 (63 aa).

The first 21 residues, 1-21 (MASVAESSGVVEVIELISDGG), serve as a signal peptide directing secretion. Positions 22–34 (NDLPRKIMSGRHG) are excised as a propeptide. 3 disulfide bridges follow: Cys-37–Cys-54, Cys-44–Cys-56, and Cys-50–Cys-62.

This sequence belongs to the protease inhibitor I7 (squash-type serine protease inhibitor) family.

The protein localises to the secreted. Its function is as follows. Inhibits trypsin. The sequence is that of Trypsin inhibitor 5 from Luffa aegyptiaca (Sponge gourd).